The following is a 295-amino-acid chain: Malonyl-[acyl-carrier protein] O-methyltransferase (295 aa).

The protein belongs to the methyltransferase superfamily.

The catalysed reaction is malonyl-[ACP] + S-adenosyl-L-methionine = malonyl-[ACP] methyl ester + S-adenosyl-L-homocysteine. Its pathway is cofactor biosynthesis; biotin biosynthesis. In terms of biological role, converts the free carboxyl group of a malonyl-thioester to its methyl ester by transfer of a methyl group from S-adenosyl-L-methionine (SAM). It allows to synthesize pimeloyl-ACP via the fatty acid synthetic pathway. The protein is Malonyl-[acyl-carrier protein] O-methyltransferase of Halorhodospira halophila (strain DSM 244 / SL1) (Ectothiorhodospira halophila (strain DSM 244 / SL1)).